Consider the following 79-residue polypeptide: MDNIEQRVKKIVAEQLGVAEADIKNESSFVNDLGADSLDTVELVMALEDEFGMEIPDEEAEKITTVQQAIDYARANVKA.

The Carrier domain occupies 2–77 (DNIEQRVKKI…QAIDYARANV (76 aa)). An O-(pantetheine 4'-phosphoryl)serine modification is found at S37.

This sequence belongs to the acyl carrier protein (ACP) family. Post-translationally, 4'-phosphopantetheine is transferred from CoA to a specific serine of apo-ACP by AcpS. This modification is essential for activity because fatty acids are bound in thioester linkage to the sulfhydryl of the prosthetic group.

It localises to the cytoplasm. It functions in the pathway lipid metabolism; fatty acid biosynthesis. Carrier of the growing fatty acid chain in fatty acid biosynthesis. In Ralstonia nicotianae (strain ATCC BAA-1114 / GMI1000) (Ralstonia solanacearum), this protein is Acyl carrier protein 1.